The primary structure comprises 84 residues: uncharacterized protein (84 aa).

A helical transmembrane segment spans residues 13-35 (TTLVLTIISTTTTTLFAIIQLYL). A coiled-coil region spans residues 41-84 (LKDAVKEIVNSELSNLKTEIEELKIKQDELSRQVEEIKRKLDQK).

It localises to the host membrane. This is an uncharacterized protein from Sulfolobus islandicus rod-shaped virus 1 (SIRV-1).